The following is a 600-amino-acid chain: Elongation factor 4 (600 aa).

The tr-type G domain occupies 5–187; that stretch reads KYIRNFSIVA…EIVEKVPAPE (183 aa). Residues 17–22 and 134–137 each bind GTP; these read DHGKST and NKVD.

Belongs to the TRAFAC class translation factor GTPase superfamily. Classic translation factor GTPase family. LepA subfamily.

The protein localises to the cell membrane. The catalysed reaction is GTP + H2O = GDP + phosphate + H(+). Functionally, required for accurate and efficient protein synthesis under certain stress conditions. May act as a fidelity factor of the translation reaction, by catalyzing a one-codon backward translocation of tRNAs on improperly translocated ribosomes. Back-translocation proceeds from a post-translocation (POST) complex to a pre-translocation (PRE) complex, thus giving elongation factor G a second chance to translocate the tRNAs correctly. Binds to ribosomes in a GTP-dependent manner. The sequence is that of Elongation factor 4 from Clostridium perfringens (strain ATCC 13124 / DSM 756 / JCM 1290 / NCIMB 6125 / NCTC 8237 / Type A).